The primary structure comprises 424 residues: Hemagglutinin-esterase (424 aa).

Residues 1–16 (MFLLPRFVLVSCIIGS) form the signal peptide. An esterase domain 1 region spans residues 7 to 127 (FVLVSCIIGS…SNDIWMQNKG (121 aa)). Over 17-392 (LGFDNPPTNV…PICVYDPLPI (376 aa)) the chain is Virion surface. Catalysis depends on Ser40, which acts as the Nucleophile. Residues Cys44 and Cys65 are joined by a disulfide bond. N-linked (GlcNAc...) asparagine; by host glycosylation is found at Asn54, Asn89, Asn153, Asn236, and Asn301. 3 cysteine pairs are disulfide-bonded: Cys113–Cys162, Cys197–Cys276, and Cys205–Cys249. The interval 128 to 266 (LFYTQVYKNM…GNYLAISNEL (139 aa)) is receptor binding. An esterase domain 2 region spans residues 267 to 379 (LLTVPTKAIC…RCPTAADINT (113 aa)). Cys307 and Cys312 are oxidised to a cystine. Asn316 is a glycosylation site (N-linked (GlcNAc...) asparagine; by host). Residues Asp326 and His329 each act as charge relay system in the active site. Cys347 and Cys371 are joined by a disulfide. Asn358 carries N-linked (GlcNAc...) asparagine; by host glycosylation. The chain crosses the membrane as a helical span at residues 393–413 (ILLGILLGVAVIIIVVLLLYF). Residues 414 to 424 (MVDNGTRLHDA) are Intravirion-facing. An N-linked (GlcNAc...) asparagine; by host glycan is attached at Asn417.

Belongs to the influenza type C/coronaviruses hemagglutinin-esterase family. Homodimer; disulfide-linked. Forms a complex with the M protein in the pre-Golgi. Associates then with S-M complex to form a ternary complex S-M-HE. N-glycosylated in the RER. In terms of processing, N-glycosylated in the host RER.

Its subcellular location is the virion membrane. The protein localises to the host cell membrane. It carries out the reaction N-acetyl-9-O-acetylneuraminate + H2O = N-acetylneuraminate + acetate + H(+). It catalyses the reaction N-acetyl-4-O-acetylneuraminate + H2O = N-acetylneuraminate + acetate + H(+). Structural protein that makes short spikes at the surface of the virus. Contains receptor binding and receptor-destroying activities. Mediates de-O-acetylation of N-acetyl-4-O-acetylneuraminic acid, which is probably the receptor determinant recognized by the virus on the surface of erythrocytes and susceptible cells. This receptor-destroying activity is important for virus release as it probably helps preventing self-aggregation and ensures the efficient spread of the progeny virus from cell to cell. May serve as a secondary viral attachment protein for initiating infection, the spike protein being the major one. May become a target for both the humoral and the cellular branches of the immune system. This chain is Hemagglutinin-esterase, found in Bovine coronavirus (strain 98TXSF-110-ENT) (BCoV-ENT).